A 54-amino-acid chain; its full sequence is Ovomucoid (54 aa).

Positions 4–54 constitute a Kazal-like domain; it reads VNCSDYPKPVCSLLYMPLCGSDNKTYGNKCNFCNAVADSNGTLTLSHFGKC. 3 disulfides stabilise this stretch: C6–C36, C14–C33, and C22–C54. N43 carries an N-linked (GlcNAc...) asparagine glycan.

Its subcellular location is the secreted. The sequence is that of Ovomucoid from Geococcyx californianus (Greater roadrunner).